A 336-amino-acid chain; its full sequence is Anthranilate phosphoribosyltransferase (336 aa).

5-phospho-alpha-D-ribose 1-diphosphate-binding positions include G79, 82–83, T87, 89–92, 107–115, and A119; these read GD, NIST, and KHGNRCVSS. Anthranilate is bound at residue G79. S91 lines the Mg(2+) pocket. N110 contributes to the anthranilate binding site. R165 serves as a coordination point for anthranilate. D224 and E225 together coordinate Mg(2+).

It belongs to the anthranilate phosphoribosyltransferase family. In terms of assembly, homodimer. It depends on Mg(2+) as a cofactor.

The enzyme catalyses N-(5-phospho-beta-D-ribosyl)anthranilate + diphosphate = 5-phospho-alpha-D-ribose 1-diphosphate + anthranilate. Its pathway is amino-acid biosynthesis; L-tryptophan biosynthesis; L-tryptophan from chorismate: step 2/5. Functionally, catalyzes the transfer of the phosphoribosyl group of 5-phosphorylribose-1-pyrophosphate (PRPP) to anthranilate to yield N-(5'-phosphoribosyl)-anthranilate (PRA). The sequence is that of Anthranilate phosphoribosyltransferase from Lachnoclostridium phytofermentans (strain ATCC 700394 / DSM 18823 / ISDg) (Clostridium phytofermentans).